The following is a 97-amino-acid chain: C-C motif chemokine 7 (97 aa).

A signal peptide spans methionine 1–alanine 23. Residue glutamine 24 is modified to Pyrrolidone carboxylic acid. Asparagine 29 carries an N-linked (GlcNAc...) asparagine glycan. 2 cysteine pairs are disulfide-bonded: cysteine 33-cysteine 57 and cysteine 34-cysteine 73.

Belongs to the intercrine beta (chemokine CC) family. As to quaternary structure, monomer. Interacts with TNFAIP6 (via Link domain).

The protein localises to the secreted. Functionally, chemotactic factor that attracts monocytes and eosinophils, but not neutrophils. Augments monocyte anti-tumor activity. The sequence is that of C-C motif chemokine 7 (Ccl7) from Rattus norvegicus (Rat).